We begin with the raw amino-acid sequence, 220 residues long: Iron-sulfur cluster repair protein YtfE (220 aa).

It belongs to the RIC family. YtfE subfamily. Homodimer.

It is found in the cytoplasm. Functionally, di-iron-containing protein involved in the repair of iron-sulfur clusters damaged by oxidative and nitrosative stress conditions. The chain is Iron-sulfur cluster repair protein YtfE from Salmonella schwarzengrund (strain CVM19633).